The chain runs to 248 residues: Mannose-binding protein C (248 aa).

The N-terminal stretch at 1-20 (MSPFLSLPLLLLSVLSASYS) is a signal peptide. The segment at 36–112 (IACSSPGING…GDSSLAASER (77 aa)) is disordered. In terms of domain architecture, Collagen-like spans 42–99 (GINGFPGKDGRDGTKGEKGEPGQGLRGLQGPPGKLGPPGNPGPSGSPGAKGQKGDPGA). The residue at position 47 (Pro-47) is a 4-hydroxyproline. Positions 49–61 (KDGRDGTKGEKGE) are enriched in basic and acidic residues. Residues Pro-73, Pro-79, Pro-82, and Pro-88 each carry the 4-hydroxyproline modification. Residues 112–130 (RKALQTEMARIKKWVTFSL) adopt a coiled-coil conformation. The C-type lectin domain maps to 134 to 245 (VGKKLFLSNG…CSSSHLAICE (112 aa)). 2 disulfides stabilise this stretch: Cys-155-Cys-244 and Cys-222-Cys-236.

As to quaternary structure, oligomeric complex of 3 or more homotrimers. Interacts with MASP1 and MASP2. Interacts with MEP1A and MEP1B and may inhibit their catalytic activity. Post-translationally, hydroxylation on proline residues within the sequence motif, GXPG, is most likely to be 4-hydroxy as this fits the requirement for 4-hydroxylation in vertebrates.

It is found in the secreted. Calcium-dependent lectin involved in innate immune defense. Binds mannose, fucose and N-acetylglucosamine on different microorganisms and activates the lectin complement pathway. Binds to late apoptotic cells, as well as to apoptotic blebs and to necrotic cells, but not to early apoptotic cells, facilitating their uptake by macrophages. The sequence is that of Mannose-binding protein C (MBL2) from Saguinus oedipus (Cotton-top tamarin).